The primary structure comprises 705 residues: DNA ligase (705 aa).

Residues 43 to 47 (DAEYD), 92 to 93 (SL), and Asp123 contribute to the NAD(+) site. Residue Lys125 is the N6-AMP-lysine intermediate of the active site. The NAD(+) site is built by Arg146, Glu184, Lys304, and Lys328. 4 residues coordinate Zn(2+): Cys422, Cys425, Cys440, and Cys445. A BRCT domain is found at 607–696 (TPVTPLAGKK…EEISGQAADD (90 aa)). The segment at 684–705 (SESEEISGQAADDYENSLLRVQ) is disordered.

Belongs to the NAD-dependent DNA ligase family. LigA subfamily. Mg(2+) serves as cofactor. It depends on Mn(2+) as a cofactor.

It catalyses the reaction NAD(+) + (deoxyribonucleotide)n-3'-hydroxyl + 5'-phospho-(deoxyribonucleotide)m = (deoxyribonucleotide)n+m + AMP + beta-nicotinamide D-nucleotide.. Its function is as follows. DNA ligase that catalyzes the formation of phosphodiester linkages between 5'-phosphoryl and 3'-hydroxyl groups in double-stranded DNA using NAD as a coenzyme and as the energy source for the reaction. It is essential for DNA replication and repair of damaged DNA. The chain is DNA ligase from Oleidesulfovibrio alaskensis (strain ATCC BAA-1058 / DSM 17464 / G20) (Desulfovibrio alaskensis).